We begin with the raw amino-acid sequence, 147 residues long: Transcription antitermination protein NusB (147 aa).

The protein belongs to the NusB family.

In terms of biological role, involved in transcription antitermination. Required for transcription of ribosomal RNA (rRNA) genes. Binds specifically to the boxA antiterminator sequence of the ribosomal RNA (rrn) operons. This chain is Transcription antitermination protein NusB, found in Legionella pneumophila (strain Paris).